Reading from the N-terminus, the 48-residue chain is Photosystem II reaction center protein K (48 aa).

Residues Met1–Gly11 constitute a propeptide that is removed on maturation. The helical transmembrane segment at Leu23 to Ala43 threads the bilayer.

It belongs to the PsbK family. As to quaternary structure, PSII is composed of 1 copy each of membrane proteins PsbA, PsbB, PsbC, PsbD, PsbE, PsbF, PsbH, PsbI, PsbJ, PsbK, PsbL, PsbM, PsbT, PsbX, PsbY, PsbZ, Psb30/Ycf12, at least 3 peripheral proteins of the oxygen-evolving complex and a large number of cofactors. It forms dimeric complexes.

The protein resides in the plastid. Its subcellular location is the chloroplast thylakoid membrane. In terms of biological role, one of the components of the core complex of photosystem II (PSII). PSII is a light-driven water:plastoquinone oxidoreductase that uses light energy to abstract electrons from H(2)O, generating O(2) and a proton gradient subsequently used for ATP formation. It consists of a core antenna complex that captures photons, and an electron transfer chain that converts photonic excitation into a charge separation. This Lepocinclis buetschlii protein is Photosystem II reaction center protein K.